The chain runs to 108 residues: Transcription factor S (108 aa).

Residues Cys-5, Cys-8, Cys-21, Cys-24, Cys-69, Cys-72, Cys-97, and Cys-100 each coordinate Zn(2+). A C4-type zinc finger spans residues 5 to 24 (CPKCNNLMLPKDGKLKCAVC). The TFIIS-type zinc-finger motif lies at 65 to 105 (TRIECPKCGHNEAYWWLQQTRCADEPETRFYKCKKCGHTWR).

It belongs to the archaeal RpoM/eukaryotic RPA12/RPB9/RPC11 RNA polymerase family.

In terms of biological role, induces RNA cleavage activity in the RNA polymerase. In its presence, the cleavage activity of the RNA polymerase truncates the RNA back to position +15 in a stepwise manner by releasing mainly dinucleotides from the 3'-end of the nascent RNA. The truncated RNAs are able to continue elongation. Involved in transcriptional proofreading and fidelity. Misincorporation of nucleotides during elongation of transcription leads to arrested elongation complexes which are rescued by TFS-promoted removal of a dinucleotide from the 3'-end. TFS is able to induce a cleavage resynthesis cycle in stalled elongation complexes (resulting from the next missing nucleotide or a reduced incorporation rate of a wrong nucleotide) preventing misincorporation and enabling proofreading in a post-incorporation manner. Pausing of elongation complexes is the main determinant of TFS-induced RNA cleavage. The chain is Transcription factor S from Methanocaldococcus jannaschii (strain ATCC 43067 / DSM 2661 / JAL-1 / JCM 10045 / NBRC 100440) (Methanococcus jannaschii).